Consider the following 322-residue polypeptide: Ribose-phosphate pyrophosphokinase 1 (322 aa).

ATP contacts are provided by residues 39–41 (DGE) and 98–99 (RQ). 2 residues coordinate Mg(2+): histidine 132 and aspartate 173. The active site involves lysine 196. D-ribose 5-phosphate contacts are provided by residues arginine 198, aspartate 224, and 228-232 (DTAGT).

The protein belongs to the ribose-phosphate pyrophosphokinase family. Class I subfamily. Homohexamer. Mg(2+) serves as cofactor.

It is found in the cytoplasm. The catalysed reaction is D-ribose 5-phosphate + ATP = 5-phospho-alpha-D-ribose 1-diphosphate + AMP + H(+). It functions in the pathway metabolic intermediate biosynthesis; 5-phospho-alpha-D-ribose 1-diphosphate biosynthesis; 5-phospho-alpha-D-ribose 1-diphosphate from D-ribose 5-phosphate (route I): step 1/1. Its function is as follows. Involved in the biosynthesis of the central metabolite phospho-alpha-D-ribosyl-1-pyrophosphate (PRPP) via the transfer of pyrophosphoryl group from ATP to 1-hydroxyl of ribose-5-phosphate (Rib-5-P). In Streptococcus agalactiae serotype III (strain NEM316), this protein is Ribose-phosphate pyrophosphokinase 1.